Here is an 82-residue protein sequence, read N- to C-terminus: Small ribosomal subunit protein bS16 (82 aa).

The protein belongs to the bacterial ribosomal protein bS16 family.

This Rippkaea orientalis (strain PCC 8801 / RF-1) (Cyanothece sp. (strain PCC 8801)) protein is Small ribosomal subunit protein bS16.